The following is a 91-amino-acid chain: Large ribosomal subunit protein eL37 (91 aa).

Zn(2+) is bound by residues cysteine 19, cysteine 22, cysteine 34, and cysteine 37. The segment at cysteine 19–cysteine 37 adopts a C4-type zinc-finger fold.

It belongs to the eukaryotic ribosomal protein eL37 family. It depends on Zn(2+) as a cofactor.

Functionally, binds to the 23S rRNA. The sequence is that of Large ribosomal subunit protein eL37 from Caenorhabditis elegans.